The following is a 311-amino-acid chain: Malate dehydrogenase (311 aa).

Residues Gly7–Gly12 and Asp32 each bind NAD(+). Substrate is bound by residues Arg82 and Arg88. Residues Asn95 and Val118–Asn120 each bind NAD(+). Substrate-binding residues include Asn120 and Arg151. His175 acts as the Proton acceptor in catalysis.

It belongs to the LDH/MDH superfamily. MDH type 3 family. In terms of assembly, homotetramer.

The catalysed reaction is (S)-malate + NAD(+) = oxaloacetate + NADH + H(+). Its activity is regulated as follows. Strongly inhibited by iodoacetic acid and CuCl(2). Completely inhibited by N-ethylmaleimide and HgCl(2). In terms of biological role, catalyzes the reversible oxidation of malate to oxaloacetate. Can use both NAD and NADP for malate oxidation, but NADPH cannot be used for oxaloacetate reduction. The sequence is that of Malate dehydrogenase from Flavobacterium frigidimaris.